The following is a 326-amino-acid chain: Chain length determinant protein (326 aa).

Residues 1-31 lie on the Cytoplasmic side of the membrane; sequence MRVENNNVSGQNHDPEQIDLIDLLVQLWRGK. Residues 32–52 traverse the membrane as a helical segment; it reads MTIIISVIVAIALAIGYLAVA. Residues 53–295 lie on the Periplasmic side of the membrane; sequence KEKWTSTAII…LPIRRDSPKK (243 aa). The helical transmembrane segment at 296 to 316 threads the bilayer; that stretch reads AITLILAVLLGGMVGAGIVLG. Topologically, residues 317-326 are cytoplasmic; the sequence is RNALRNYNAK.

This sequence belongs to the WzzB/Cld/Rol family. In terms of assembly, homodimer.

Its subcellular location is the cell inner membrane. It functions in the pathway bacterial outer membrane biogenesis; lipopolysaccharide biosynthesis. Functionally, confers a modal distribution of chain length on the O-antigen component of lipopolysaccharide (LPS). Gives rise to a reduced number of short chain molecules and increases in numbers of longer molecules. This chain is Chain length determinant protein (wzzB), found in Escherichia coli (strain K12).